The following is a 289-amino-acid chain: Probable early E4 33 kDa protein (289 aa).

Belongs to the adenoviridae E4 30 to 34 kDa protein family. Interacts with E1B-55k.

The protein localises to the host nucleus. It localises to the host cytoplasm. Plays a major role to prevent cellular inhibition of viral genome replication by nuclear bodies. Assembles an SCF-like E3 ubiquitin ligase complex based on the cellular proteins ELOB, ELOC, CUL5 and RBX1, in cooperation with viral E1B-55K. This viral RING-type ligase ubiquitinates cellular substrates prior to proteasomal degradation: p53/TP53, LIG4, MRE11-RAD50-NBS1 (MRN) complex, ITGA3, DAXX and BLM. The polypeptide is Probable early E4 33 kDa protein (Mus musculus (Mouse)).